The primary structure comprises 404 residues: Cysteine desulfurase IscS (404 aa).

Pyridoxal 5'-phosphate is bound by residues 75–76, N155, Q183, and 203–205; these read AT and SGH. K206 carries the N6-(pyridoxal phosphate)lysine modification. T243 is a binding site for pyridoxal 5'-phosphate. C328 (cysteine persulfide intermediate) is an active-site residue. A [2Fe-2S] cluster-binding site is contributed by C328.

The protein belongs to the class-V pyridoxal-phosphate-dependent aminotransferase family. NifS/IscS subfamily. In terms of assembly, homodimer. Forms a heterotetramer with IscU, interacts with other sulfur acceptors. Requires pyridoxal 5'-phosphate as cofactor.

The protein localises to the cytoplasm. The enzyme catalyses (sulfur carrier)-H + L-cysteine = (sulfur carrier)-SH + L-alanine. It participates in cofactor biosynthesis; iron-sulfur cluster biosynthesis. Its function is as follows. Master enzyme that delivers sulfur to a number of partners involved in Fe-S cluster assembly, tRNA modification or cofactor biosynthesis. Catalyzes the removal of elemental sulfur atoms from cysteine to produce alanine. Functions as a sulfur delivery protein for Fe-S cluster synthesis onto IscU, an Fe-S scaffold assembly protein, as well as other S acceptor proteins. In Serratia proteamaculans (strain 568), this protein is Cysteine desulfurase IscS.